Here is a 192-residue protein sequence, read N- to C-terminus: Potassium channel HX13_20290 (192 aa).

Residues 1–24 (MTKGRLEAFSDGVLAIIITIMVLE) traverse the membrane as a helical segment. Positions 5–11 (RLEAFSD) match the RxxxFSD motif motif. L25 is a topological domain (cytoplasmic). Positions 26–29 (KVPE) are short helix H1. Topologically, residues 26-39 (KVPEGSSWASLQPI) are extracellular. A short helix H2 region spans residues 31-37 (SSWASLQ). The helical transmembrane segment at 40–65 (LPRFLAYIFSFIYVGIYWNNHHHLFQ) threads the bilayer. Over 66-71 (TVKKVN) the chain is Cytoplasmic. The chain crosses the membrane as a helical span at residues 72–93 (GSILWANLHLLFWLSLMPIATE). Topologically, residues 94 to 101 (WIGTSHFA) are extracellular. The chain crosses the membrane as a helical span at residues 102–126 (QNPVATYGIGLIMSAIAYTILENVI). Over 127-133 (IRCEGEN) the chain is Cytoplasmic. Residues 134–162 (SKLKEAIHSKFKEYISIIFYVLGIATSFF) form a helical membrane-spanning segment. Residues 163-164 (YP) are Extracellular-facing. The chain crosses the membrane as a helical span at residues 165-180 (YIAIGFYYLVALIWLI). Residues 181 to 192 (PDKRIEKSLKEN) lie on the Cytoplasmic side of the membrane.

Belongs to the TMEM175 family. As to quaternary structure, homotetramer.

The protein resides in the membrane. The enzyme catalyses K(+)(in) = K(+)(out). Its function is as follows. Potassium channel. The chain is Potassium channel HX13_20290 from Chryseobacterium sp. (strain P1-3).